A 257-amino-acid chain; its full sequence is RNA polymerase sigma-B factor (257 aa).

The short motif at 58 to 71 (DIIQVGMLGLLGAI) is the Polymerase core binding element. The H-T-H motif DNA-binding region spans 224–243 (QKDTGERLGISQMHVSRIKR).

It belongs to the sigma-70 factor family. SigB subfamily.

Sigma factors are initiation factors that promote the attachment of RNA polymerase to specific initiation sites and are then released. The chain is RNA polymerase sigma-B factor (sigB) from Bacillus anthracis.